The primary structure comprises 234 residues: Triosephosphate isomerase (234 aa).

Substrate is bound at residue Asn-8–Lys-10. Residue His-90 is the Electrophile of the active site. Residue Glu-159 is the Proton acceptor of the active site. Positions 165 and 197 each coordinate substrate.

The protein belongs to the triosephosphate isomerase family. In terms of assembly, homodimer.

It is found in the cytoplasm. It carries out the reaction D-glyceraldehyde 3-phosphate = dihydroxyacetone phosphate. The protein operates within carbohydrate biosynthesis; gluconeogenesis. It participates in carbohydrate degradation; glycolysis; D-glyceraldehyde 3-phosphate from glycerone phosphate: step 1/1. Its function is as follows. Involved in the gluconeogenesis. Catalyzes stereospecifically the conversion of dihydroxyacetone phosphate (DHAP) to D-glyceraldehyde-3-phosphate (G3P). In Helicobacter pylori (strain J99 / ATCC 700824) (Campylobacter pylori J99), this protein is Triosephosphate isomerase.